The primary structure comprises 60 residues: Cytotoxin SP15a (60 aa).

4 disulfides stabilise this stretch: Cys-3–Cys-21, Cys-14–Cys-38, Cys-42–Cys-53, and Cys-54–Cys-59.

Belongs to the three-finger toxin family. Short-chain subfamily. Type IA cytotoxin sub-subfamily. Monomer in solution; Homodimer and oligomer in the presence of negatively charged lipids forming a pore with a size ranging between 20 and 30 Angstroms. As to expression, expressed by the venom gland.

The protein resides in the secreted. Its subcellular location is the target cell membrane. Functionally, shows cytolytic activity on many different cells by forming pore in lipid membranes. In vivo, increases heart rate or kills the animal by cardiac arrest. In addition, it binds to heparin with high affinity, interacts with Kv channel-interacting protein 1 (KCNIP1) in a calcium-independent manner, and binds to integrin alpha-V/beta-3 (ITGAV/ITGB3) with moderate affinity. The polypeptide is Cytotoxin SP15a (Naja atra (Chinese cobra)).